The following is a 402-amino-acid chain: Phosphoglycerate kinase (402 aa).

Residues 24–26, Arg40, 63–66, Arg122, and Arg155 contribute to the substrate site; these read DFN and HFGR. ATP is bound by residues Lys206, Gly297, Glu328, and 357–360; that span reads GGDS.

This sequence belongs to the phosphoglycerate kinase family. Monomer.

The protein localises to the cytoplasm. The enzyme catalyses (2R)-3-phosphoglycerate + ATP = (2R)-3-phospho-glyceroyl phosphate + ADP. It participates in carbohydrate degradation; glycolysis; pyruvate from D-glyceraldehyde 3-phosphate: step 2/5. The protein is Phosphoglycerate kinase of Synechococcus sp. (strain WH7803).